The following is a 529-amino-acid chain: MTAMKGDSEDSIESMRPSNLQVFANNSTLHGMSHIFAYGHMTFRRFLWTLSFMGSLGLLMYVCMDRVYYYFEFPHVTKLDEVAAPNLTFPAVTFCNLNEFRFSKITKNDLYHVGELLALLNENYQIANPHLADPEVLTLLKEKASFNGFKPKQFNMTDFYNRTGHDINEMLLQCSFRGEECFPLNFTTIYTRYGKCYTFNSGLDGNPLLTTLKGGTGNGLEIMLDIQQDEYLPVWGDTDETSYEAGIKVQIHSQDEPPFIDQLGFGVAPGFQTFVSCQQQLLLYLPPPWGDCRSAPMDSEYFSTYSITACRIDCETRYLLENCNCRMVHMPGTSTVCTPEQYKDCADPALDFLVEKDNDYCVCDTPCNMTRYGKELSMVKIPSKASAKYLAKKFNKTEQYITDNILVLDIFFEALNYEKIEQKKAYEVAGLLGDIGGQMGLFIGASVLTILEIFDYLYEVLKDKILGSVLRKRRPHRSASDNLVIVSLHDFKISSVFLLASYMCFVCYIVLLNAACVYLPFVVGSNSGK.

Residues 1–51 lie on the Cytoplasmic side of the membrane; it reads MTAMKGDSEDSIESMRPSNLQVFANNSTLHGMSHIFAYGHMTFRRFLWTLS. The chain crosses the membrane as a helical span at residues 52–68; that stretch reads FMGSLGLLMYVCMDRVY. At 69 to 427 the chain is on the extracellular side; it reads YYFEFPHVTK…EKIEQKKAYE (359 aa). 3 N-linked (GlcNAc...) asparagine glycosylation sites follow: Asn-86, Asn-155, and Asn-161. Cystine bridges form between Cys-95–Cys-196, Cys-174–Cys-181, Cys-292–Cys-367, Cys-310–Cys-363, Cys-314–Cys-361, Cys-323–Cys-345, and Cys-325–Cys-337. Asn-185 carries N-linked (GlcNAc...) asparagine glycosylation. Asn-368 and Asn-395 each carry an N-linked (GlcNAc...) asparagine glycan. Residues 428-458 traverse the membrane as a discontinuously helical segment; it reads VAGLLGDIGGQMGLFIGASVLTILEIFDYLY. Residues 444–446 carry the GAS motif; ion selectivity filter motif; that stretch reads GAS. The Cytoplasmic segment spans residues 459-529; sequence EVLKDKILGS…PFVVGSNSGK (71 aa).

It belongs to the amiloride-sensitive sodium channel (TC 1.A.6) family. ASIC1 subfamily. In terms of assembly, homotrimer. Heterotrimer; with other ASIC proteins producing channel with different properties. Interacts with asic1a. As to expression, expressed in central nervous system.

It localises to the cell membrane. Its subcellular location is the postsynaptic cell membrane. It is found in the cell projection. The protein localises to the dendrite. It carries out the reaction Na(+)(in) = Na(+)(out). It catalyses the reaction K(+)(in) = K(+)(out). The enzyme catalyses Li(+)(in) = Li(+)(out). The catalysed reaction is Ca(2+)(in) = Ca(2+)(out). With respect to regulation, inhibited by the diuretic drug amiloride. In terms of biological role, forms voltage-independent, pH-gated trimeric sodium channels that act as postsynaptic excitatory receptors in the nervous system, playing a crucial role in regulating synaptic plasticity, learning, and memory. Upon extracellular pH drop this channel elicits transient, fast activating, and completely desensitizing inward currents. Displays high selectivity for sodium ions but can also permit the permeation of other cations. The sequence is that of Acid-sensing ion channel 1C from Danio rerio (Zebrafish).